A 764-amino-acid chain; its full sequence is 5-methyltetrahydropteroyltriglutamate--homocysteine methyltransferase (764 aa).

Residues 17–20 (RELK) and Lys117 each bind 5-methyltetrahydropteroyltri-L-glutamate. Residues 437–439 (IGS) and Glu490 contribute to the L-homocysteine site. L-methionine is bound by residues 437 to 439 (IGS) and Glu490. 5-methyltetrahydropteroyltri-L-glutamate-binding positions include 521 to 522 (RC) and Trp567. L-homocysteine is bound at residue Asp605. L-methionine is bound at residue Asp605. 5-methyltetrahydropteroyltri-L-glutamate is bound at residue Glu611. Zn(2+) is bound by residues His647, Cys649, and Glu671. His701 (proton donor) is an active-site residue. Cys733 serves as a coordination point for Zn(2+).

The protein belongs to the vitamin-B12 independent methionine synthase family. It depends on Zn(2+) as a cofactor.

It catalyses the reaction 5-methyltetrahydropteroyltri-L-glutamate + L-homocysteine = tetrahydropteroyltri-L-glutamate + L-methionine. It participates in amino-acid biosynthesis; L-methionine biosynthesis via de novo pathway; L-methionine from L-homocysteine (MetE route): step 1/1. Functionally, catalyzes the transfer of a methyl group from 5-methyltetrahydrofolate to homocysteine resulting in methionine formation. The chain is 5-methyltetrahydropteroyltriglutamate--homocysteine methyltransferase from Blochmanniella pennsylvanica (strain BPEN).